A 118-amino-acid polypeptide reads, in one-letter code: Large ribosomal subunit protein eL18 (118 aa).

The protein belongs to the eukaryotic ribosomal protein eL18 family.

This Sulfolobus acidocaldarius (strain ATCC 33909 / DSM 639 / JCM 8929 / NBRC 15157 / NCIMB 11770) protein is Large ribosomal subunit protein eL18 (rpl18e).